Reading from the N-terminus, the 376-residue chain is Beta sliding clamp (376 aa).

This sequence belongs to the beta sliding clamp family. As to quaternary structure, forms a ring-shaped head-to-tail homodimer around DNA which binds and tethers DNA polymerases and other proteins to the DNA. The DNA replisome complex has a single clamp-loading complex (3 tau and 1 each of delta, delta', psi and chi subunits) which binds 3 Pol III cores (1 core on the leading strand and 2 on the lagging strand) each with a beta sliding clamp dimer. Additional proteins in the replisome are other copies of gamma, psi and chi, Ssb, DNA helicase and RNA primase.

It is found in the cytoplasm. Functionally, confers DNA tethering and processivity to DNA polymerases and other proteins. Acts as a clamp, forming a ring around DNA (a reaction catalyzed by the clamp-loading complex) which diffuses in an ATP-independent manner freely and bidirectionally along dsDNA. Initially characterized for its ability to contact the catalytic subunit of DNA polymerase III (Pol III), a complex, multichain enzyme responsible for most of the replicative synthesis in bacteria; Pol III exhibits 3'-5' exonuclease proofreading activity. The beta chain is required for initiation of replication as well as for processivity of DNA replication. The chain is Beta sliding clamp (dnaN) from Streptomyces coelicolor (strain ATCC BAA-471 / A3(2) / M145).